We begin with the raw amino-acid sequence, 368 residues long: Protein-glutamate methylesterase/protein-glutamine glutaminase (368 aa).

Residues 9–126 (KVLVVDDSAF…SINMKELKDE (118 aa)) enclose the Response regulatory domain. Asp60 carries the post-translational modification 4-aspartylphosphate. The region spanning 161 to 354 (SVPARIAVAI…ETVVKAVEII (194 aa)) is the CheB-type methylesterase domain. Active-site residues include Ser173, His200, and Asp296.

It belongs to the CheB family. Phosphorylated by CheA. Phosphorylation of the N-terminal regulatory domain activates the methylesterase activity.

Its subcellular location is the cytoplasm. The enzyme catalyses [protein]-L-glutamate 5-O-methyl ester + H2O = L-glutamyl-[protein] + methanol + H(+). It catalyses the reaction L-glutaminyl-[protein] + H2O = L-glutamyl-[protein] + NH4(+). Involved in chemotaxis. Part of a chemotaxis signal transduction system that modulates chemotaxis in response to various stimuli. Catalyzes the demethylation of specific methylglutamate residues introduced into the chemoreceptors (methyl-accepting chemotaxis proteins or MCP) by CheR. Also mediates the irreversible deamidation of specific glutamine residues to glutamic acid. This is Protein-glutamate methylesterase/protein-glutamine glutaminase from Pyrococcus horikoshii (strain ATCC 700860 / DSM 12428 / JCM 9974 / NBRC 100139 / OT-3).